The chain runs to 334 residues: Glyceraldehyde-3-phosphate dehydrogenase B (334 aa).

NAD(+) contacts are provided by residues 12 to 13, aspartate 34, and serine 121; that span reads RI. D-glyceraldehyde 3-phosphate contacts are provided by residues 149-151, threonine 180, 209-210, and arginine 232; these read SCT and TG. Cysteine 150 serves as the catalytic Nucleophile. Residue asparagine 314 participates in NAD(+) binding.

It belongs to the glyceraldehyde-3-phosphate dehydrogenase family. In terms of assembly, homotetramer.

The enzyme catalyses D-glyceraldehyde 3-phosphate + phosphate + NAD(+) = (2R)-3-phospho-glyceroyl phosphate + NADH + H(+). The protein operates within carbohydrate degradation; glycolysis; pyruvate from D-glyceraldehyde 3-phosphate: step 1/5. Functionally, glyceraldehyde-3-phosphate dehydrogenase; part of the gene cluster that mediates the biosynthesis of heptelidic acid (HA), a sesquiterpene lactone that acts as an inhibitor of glyceraldehyde-3-phosphatedehydrogenase (GAPDH) and a growth inhibitor of the salt-tolerant lactic acid bacteria in soy sauce brewing. The GAPDPH hepG/gdpB shows much higher resistance to HA than the GAPDH gpdA located outside of the cluster, but it does not seem to act in self-resistance. In Aspergillus oryzae (strain ATCC 42149 / RIB 40) (Yellow koji mold), this protein is Glyceraldehyde-3-phosphate dehydrogenase B.